The primary structure comprises 496 residues: UDP-N-acetylmuramate--L-alanine ligase (496 aa).

An ATP-binding site is contributed by 122 to 128; that stretch reads GTHGKTT.

The protein belongs to the MurCDEF family.

The protein resides in the cytoplasm. It catalyses the reaction UDP-N-acetyl-alpha-D-muramate + L-alanine + ATP = UDP-N-acetyl-alpha-D-muramoyl-L-alanine + ADP + phosphate + H(+). Its pathway is cell wall biogenesis; peptidoglycan biosynthesis. Cell wall formation. This is UDP-N-acetylmuramate--L-alanine ligase from Mycobacterium avium (strain 104).